The chain runs to 253 residues: Large ribosomal subunit protein uL4 (253 aa).

This sequence belongs to the universal ribosomal protein uL4 family. In terms of assembly, part of the 50S ribosomal subunit.

One of the primary rRNA binding proteins, this protein initially binds near the 5'-end of the 23S rRNA. It is important during the early stages of 50S assembly. It makes multiple contacts with different domains of the 23S rRNA in the assembled 50S subunit and ribosome. Functionally, forms part of the polypeptide exit tunnel. The protein is Large ribosomal subunit protein uL4 of Methanococcoides burtonii (strain DSM 6242 / NBRC 107633 / OCM 468 / ACE-M).